A 262-amino-acid polypeptide reads, in one-letter code: uncharacterized protein (262 aa).

The ABC transporter domain occupies 5 to 223 (IKVENLTKYF…MAYIEYLDNG (219 aa)). 37–44 (GHNGAGKT) contacts ATP.

It belongs to the ABC transporter superfamily.

This is an uncharacterized protein from Methanocaldococcus jannaschii (strain ATCC 43067 / DSM 2661 / JAL-1 / JCM 10045 / NBRC 100440) (Methanococcus jannaschii).